A 523-amino-acid chain; its full sequence is NAD(P)H-quinone oxidoreductase subunit 2 (523 aa).

13 helical membrane-spanning segments follow: residues 29–49 (AVAPEGAVLLAMLATLLVDLA), 57–77 (WVPPICYAGLGTALLLLALQW), 94–114 (LAIAFRAVVALSTLLSLMISW), 128–148 (AGILLAATLGGMLLCGATDLV), 182–202 (LLVGSAAAAVFLYGSSLLYGL), 223–243 (AALALVFVLATVAFKIAAVPF), 255–275 (PTPVVAFLSVGSKAAGFALAL), 291–311 (LLFTVLAVLSMTLGNVVALAQ), 317–337 (MLAYSSIGQAGFVMIGLVCGT), 345–365 (VLYTAAYLFMNLGAFACIILF), 389–409 (LGLSLCLLSLGGIPPMLGFFG), 424–444 (VLVVVGLITSVISIYYYIGVI), and 477–497 (VALVTCVVVTAVGGILSNPLF).

The protein belongs to the complex I subunit 2 family. In terms of assembly, NDH-1 can be composed of about 15 different subunits; different subcomplexes with different compositions have been identified which probably have different functions.

It localises to the cellular thylakoid membrane. The catalysed reaction is a plastoquinone + NADH + (n+1) H(+)(in) = a plastoquinol + NAD(+) + n H(+)(out). It catalyses the reaction a plastoquinone + NADPH + (n+1) H(+)(in) = a plastoquinol + NADP(+) + n H(+)(out). NDH-1 shuttles electrons from an unknown electron donor, via FMN and iron-sulfur (Fe-S) centers, to quinones in the respiratory and/or the photosynthetic chain. The immediate electron acceptor for the enzyme in this species is believed to be plastoquinone. Couples the redox reaction to proton translocation, and thus conserves the redox energy in a proton gradient. Cyanobacterial NDH-1 also plays a role in inorganic carbon-concentration. The chain is NAD(P)H-quinone oxidoreductase subunit 2 from Synechococcus sp. (strain WH7803).